The primary structure comprises 75 residues: UPF0352 protein PMI0824 (75 aa).

It belongs to the UPF0352 family.

This Proteus mirabilis (strain HI4320) protein is UPF0352 protein PMI0824.